The primary structure comprises 780 residues: LPS-assembly protein LptD (780 aa).

The first 24 residues, 1 to 24 (MKKRFPTLLATLIWTALYSQHTLA), serve as a signal peptide directing secretion.

It belongs to the LptD family. In terms of assembly, component of the lipopolysaccharide transport and assembly complex. Interacts with LptE and LptA.

The protein localises to the cell outer membrane. Functionally, together with LptE, is involved in the assembly of lipopolysaccharide (LPS) at the surface of the outer membrane. This chain is LPS-assembly protein LptD, found in Yersinia pseudotuberculosis serotype I (strain IP32953).